Consider the following 148-residue polypeptide: Large ribosomal subunit protein uL15 (148 aa).

The span at Met1–Gly30 shows a compositional bias: basic residues. Residues Met1–Met38 are disordered.

The protein belongs to the universal ribosomal protein uL15 family. In terms of assembly, component of the large ribosomal subunit.

The protein localises to the cytoplasm. Component of the large ribosomal subunit. The ribosome is a large ribonucleoprotein complex responsible for the synthesis of proteins in the cell. The chain is Large ribosomal subunit protein uL15 (rpl27a) from Xenopus laevis (African clawed frog).